The chain runs to 646 residues: Protein SENSITIVE TO UV 2 (646 aa).

The disordered stretch occupies residues 42-70 (PAPPPSTKISSSLSHPMQLQSSAGQQRKQ). Residues 48-70 (TKISSSLSHPMQLQSSAGQQRKQ) show a composition bias toward polar residues. Positions 119–126 (NRRCDSEK) match the Nuclear localization signal motif. A coiled-coil region spans residues 123–157 (DSEKDLEIDRLKKELERVSKQLLDVEQECSQLKKG). In terms of domain architecture, Phosphatase tensin-type spans 376–646 (KRTEQDVKQE…VFAFLGDNTI (271 aa)).

This sequence belongs to the serpin family. As to quaternary structure, forms multimers through the coiled-coil domain. Post-translationally, probably phosphorylated by ATR. Accumulates throughout the root tip.

It localises to the nucleus. Its subcellular location is the cytoplasm. Its function is as follows. Required for tolerance to DNA-damaging and cross-linking agents such as UVB irradiation, gamma-radiation, aphidicolin, ionizing radiation and hydroxyurea (HU), cisplatin (CDDP) and mitomycin C (MMC). Involved in cell-cycle G2/M arrest in response to DNA damage. Required for aluminum-dependent gene regulation and root growth inhibition in an ATR-dependent manner by halting cell cycle progression and triggering loss of the quiescent center (QC). This chain is Protein SENSITIVE TO UV 2, found in Arabidopsis thaliana (Mouse-ear cress).